The sequence spans 235 residues: uncharacterized protein (235 aa).

The chain crosses the membrane as a helical span at residues 27–47; the sequence is AMKLWSTWITLLILTFFCSEC. The CX domain maps to 124–185; it reads YFWGESKYVP…CCGYDCCSNS (62 aa). A helical membrane pass occupies residues 187–207; that stretch reads IFTSIFSLLVILLIVSVLSIF.

It localises to the membrane. This is an uncharacterized protein from Caenorhabditis elegans.